Here is a 264-residue protein sequence, read N- to C-terminus: Acyl-[acyl-carrier-protein]--UDP-N-acetylglucosamine O-acyltransferase (264 aa).

The protein belongs to the transferase hexapeptide repeat family. LpxA subfamily. In terms of assembly, homotrimer.

The protein localises to the cytoplasm. The enzyme catalyses a (3R)-hydroxyacyl-[ACP] + UDP-N-acetyl-alpha-D-glucosamine = a UDP-3-O-[(3R)-3-hydroxyacyl]-N-acetyl-alpha-D-glucosamine + holo-[ACP]. It participates in glycolipid biosynthesis; lipid IV(A) biosynthesis; lipid IV(A) from (3R)-3-hydroxytetradecanoyl-[acyl-carrier-protein] and UDP-N-acetyl-alpha-D-glucosamine: step 1/6. Involved in the biosynthesis of lipid A, a phosphorylated glycolipid that anchors the lipopolysaccharide to the outer membrane of the cell. This Rickettsia typhi (strain ATCC VR-144 / Wilmington) protein is Acyl-[acyl-carrier-protein]--UDP-N-acetylglucosamine O-acyltransferase.